The following is a 200-amino-acid chain: Putative protein ATXN8OS (200 aa).

The segment at 19-39 (PFSGLKEEEEEDGEDDEEEEE) is disordered. A compositionally biased stretch (acidic residues) spans 25-39 (EEEEEDGEDDEEEEE).

In terms of tissue distribution, expressed in brain. Expressed in muscle tissues (at protein level).

The protein localises to the cytoplasm. The sequence is that of Putative protein ATXN8OS from Homo sapiens (Human).